The following is a 265-amino-acid chain: 5'-nucleotidase SurE (265 aa).

A divalent metal cation-binding residues include Asp8, Asp9, Ser40, and Asn98.

Belongs to the SurE nucleotidase family. Requires a divalent metal cation as cofactor.

The protein localises to the cytoplasm. It carries out the reaction a ribonucleoside 5'-phosphate + H2O = a ribonucleoside + phosphate. In terms of biological role, nucleotidase that shows phosphatase activity on nucleoside 5'-monophosphates. The sequence is that of 5'-nucleotidase SurE from Thermosynechococcus vestitus (strain NIES-2133 / IAM M-273 / BP-1).